The sequence spans 252 residues: Major prion protein (252 aa).

The first 22 residues, 1–22 (MANLGCWMLVLFVATWSDLGLC), serve as a signal peptide directing secretion. The tract at residues 23–38 (KKRPKPGGWNTGGSRY) is interaction with ADGRG6. The tract at residues 23-229 (KKRPKPGGWN…ESQAYYQRGS (207 aa)) is interaction with GRB2, ERI3 and SYN1. The tract at residues 26 to 106 (PKPGGWNTGG…QWNKPSKPKT (81 aa)) is disordered. A run of 5 repeats spans residues 51-58 (PQGGGWGQ), 59-66 (PHGGGWGQ), 67-74 (PHGGGWGQ), 75-82 (PHGGSWGQ), and 83-90 (PHGGGWGQ). The tract at residues 51–90 (PQGGGWGQPHGGGWGQPHGGGWGQPHGGSWGQPHGGGWGQ) is 5 X 8 AA tandem repeats of P-H-G-G-G-W-G-Q. Over residues 52–94 (QGGGWGQPHGGGWGQPHGGGWGQPHGGSWGQPHGGGWGQGGGT) the composition is skewed to gly residues. Residues H60, G61, G62, H68, G69, G70, H76, G77, G78, H84, G85, and G86 each coordinate Cu(2+). C178 and C213 are oxidised to a cystine. N180 and N196 each carry an N-linked (GlcNAc...) asparagine glycan. S229 carries GPI-anchor amidated serine lipidation. The propeptide at 230–252 (SMVLFSSPPVILLISFLIFLIVG) is removed in mature form.

It belongs to the prion family. Monomer and homodimer. Has a tendency to aggregate into amyloid fibrils containing a cross-beta spine, formed by a steric zipper of superposed beta-strands. Soluble oligomers may represent an intermediate stage on the path to fibril formation. Copper binding may promote oligomerization. Interacts with GRB2, APP, ERI3/PRNPIP and SYN1. Mislocalized cytosolically exposed PrP interacts with MGRN1; this interaction alters MGRN1 subcellular location and causes lysosomal enlargement. Interacts with APP. Interacts with KIAA1191. Interacts with ADGRG6.

It localises to the cell membrane. It is found in the golgi apparatus. Its function is as follows. Its primary physiological function is unclear. May play a role in neuronal development and synaptic plasticity. May be required for neuronal myelin sheath maintenance. May promote myelin homeostasis through acting as an agonist for ADGRG6 receptor. May play a role in iron uptake and iron homeostasis. Soluble oligomers are toxic to cultured neuroblastoma cells and induce apoptosis (in vitro). Association with GPC1 (via its heparan sulfate chains) targets PRNP to lipid rafts. Also provides Cu(2+) or Zn(2+) for the ascorbate-mediated GPC1 deaminase degradation of its heparan sulfate side chains. The sequence is that of Major prion protein (PRNP) from Sapajus apella (Brown-capped capuchin).